Here is a 325-residue protein sequence, read N- to C-terminus: MKDNILKRSFHHSKFENIKELVKLKEKQDVKISLAFPSLNEEKTIGKEIIIMKSELMEKYPLLDEIAVIDSGSEDETVSIAKEYGAKVFYSSDILPEYGFYKGKGENLWKSLYALDGDIIVWVDSDIENIHPKFVYGLVGALLNYPEIGYVKAFYDRPIVGKSAMQPTGGGRVTELVARPLFSLFYPELSTIIQPLSGEYAGRREILEKLPFFVGYGVEIAHLIDIAEKFGSEIIAQVDLELRIHDNQPLHSLSKMAFELTKVVLKRLEKYGKLDLNTELTDKHIMIQKKENEKVLVPTEILSVERPPMITIPEYKEKFSKEEKV.

UDP-alpha-D-glucose contacts are provided by residues proline 37–glutamate 41, serine 71, lysine 104, and aspartate 124–serine 125. Aspartate 126 contributes to the Mn(2+) binding site. A (2R)-3-phosphoglycerate-binding site is contributed by glycine 171–threonine 174. Residues tyrosine 216 to glutamate 219 and arginine 243 to glutamine 248 contribute to the UDP-alpha-D-glucose site. Histidine 245 is a Mn(2+) binding site. Asparagine 247 is a (2R)-3-phosphoglycerate binding site.

This sequence belongs to the glycosyltransferase 2 family. As to quaternary structure, homodimer in solution. The cofactor is Co(2+). Requires Mg(2+) as cofactor. Mn(2+) serves as cofactor. It depends on Ni(2+) as a cofactor. Zn(2+) is required as a cofactor.

The enzyme catalyses an NDP-alpha-D-glucose + (2R)-3-phosphoglycerate = (2R)-2-O-(alpha-D-glucopyranosyl)-3-phospho-glycerate + a ribonucleoside 5'-diphosphate + H(+). The catalysed reaction is (2R)-3-phosphoglycerate + UDP-alpha-D-glucose = (2R)-2-O-(alpha-D-glucopyranosyl)-3-phospho-glycerate + UDP + H(+). It catalyses the reaction ADP-alpha-D-glucose + (2R)-3-phosphoglycerate = (2R)-2-O-(alpha-D-glucopyranosyl)-3-phospho-glycerate + ADP + H(+). With respect to regulation, inhibited by ADP and EDTA. Involved in the biosynthesis of the compatible solute mannosylglucosylglycerate through a phosphorylating pathway. Catalyzes the transfer of the glucose moiety from a nuleotide sugar such as UDP-alpha-D-glucose to the position 2 of 3-phospho-D-glycerate (3-PGA) to form glucosyl-3-phosphoglycerate (GPG). UDP-glucose is the preferred substrate, but it can be partially replaced by ADP-glucose. This chain is Glucosyl-3-phosphoglycerate synthase, found in Petrotoga mobilis (strain DSM 10674 / SJ95).